The primary structure comprises 561 residues: Phosphatidylinositol 4-kinase gamma 1 (561 aa).

Residues 121-416 enclose the PI3K/PI4K catalytic domain; sequence GAQPLLLPSG…SVFGKTSEDS (296 aa). The segment at 127–133 is G-loop; that stretch reads LPSGMGG. Residues 128–134, K149, and 233–236 contribute to the ATP site; these read PSGMGGA and QRFV. The catalytic loop stretch occupies residues 266 to 274; sequence LNLDRHAGN. Residues 296–322 are activation loop; that stretch reads PIDHGLCLPECLDDPYFEWLNWPQALV. D298 serves as a coordination point for ATP. The segment at 456 to 520 is disordered; that stretch reads PPLVPRGPRA…PISPNHDESK (65 aa). The span at 467–484 shows a compositional bias: polar residues; that stretch reads TIPNDVTASMSSSQNQRI.

This sequence belongs to the PI3/PI4-kinase family. Type II PI4K subfamily.

It catalyses the reaction a 1,2-diacyl-sn-glycero-3-phospho-(1D-myo-inositol) + ATP = a 1,2-diacyl-sn-glycero-3-phospho-(1D-myo-inositol 4-phosphate) + ADP + H(+). The phosphorylation of phosphatidylinositol (PI) to PI4P is the first committed step in the generation of phosphatidylinositol 4,5-bisphosphate (PIP2), a precursor of the second messenger inositol 1,4,5-trisphosphate (InsP3). This chain is Phosphatidylinositol 4-kinase gamma 1 (PI4KG1), found in Arabidopsis thaliana (Mouse-ear cress).